The primary structure comprises 90 residues: UPF0335 protein bsl7135 (90 aa).

This sequence belongs to the UPF0335 family.

The polypeptide is UPF0335 protein bsl7135 (Bradyrhizobium diazoefficiens (strain JCM 10833 / BCRC 13528 / IAM 13628 / NBRC 14792 / USDA 110)).